Reading from the N-terminus, the 340-residue chain is tRNA N6-adenosine threonylcarbamoyltransferase (340 aa).

2 residues coordinate Fe cation: H111 and H115. Residues 134-138 (LVSGG), D167, G180, and N276 each bind substrate. D304 contributes to the Fe cation binding site.

This sequence belongs to the KAE1 / TsaD family. The cofactor is Fe(2+).

The protein resides in the cytoplasm. The enzyme catalyses L-threonylcarbamoyladenylate + adenosine(37) in tRNA = N(6)-L-threonylcarbamoyladenosine(37) in tRNA + AMP + H(+). Its function is as follows. Required for the formation of a threonylcarbamoyl group on adenosine at position 37 (t(6)A37) in tRNAs that read codons beginning with adenine. Is involved in the transfer of the threonylcarbamoyl moiety of threonylcarbamoyl-AMP (TC-AMP) to the N6 group of A37, together with TsaE and TsaB. TsaD likely plays a direct catalytic role in this reaction. The sequence is that of tRNA N6-adenosine threonylcarbamoyltransferase from Helicobacter pylori (strain P12).